The sequence spans 1370 residues: DNA-directed RNA polymerase subunit beta (1370 aa).

The protein belongs to the RNA polymerase beta chain family. As to quaternary structure, the RNAP catalytic core consists of 2 alpha, 1 beta, 1 beta' and 1 omega subunit. When a sigma factor is associated with the core the holoenzyme is formed, which can initiate transcription.

It catalyses the reaction RNA(n) + a ribonucleoside 5'-triphosphate = RNA(n+1) + diphosphate. DNA-dependent RNA polymerase catalyzes the transcription of DNA into RNA using the four ribonucleoside triphosphates as substrates. This chain is DNA-directed RNA polymerase subunit beta, found in Bordetella avium (strain 197N).